The following is a 484-amino-acid chain: GDP-mannose transporter (484 aa).

Basic and acidic residues-rich tracts occupy residues 1 to 12 and 19 to 28; these read MSMTTSRERNVP and ELGRSRHSDV. A disordered region spans residues 1–34; the sequence is MSMTTSRERNVPPDDNEIELGRSRHSDVAPESES. The Cytoplasmic segment spans residues 1-60; the sequence is MSMTTSRERNVPPDDNEIELGRSRHSDVAPESESPQAHLLNSDVASVTKNFMRNASHATA. Residues 61-81 traverse the membrane as a helical segment; that stretch reads NSGAIAAVLSYCIASISMTVI. Residues 82-90 lie on the Lumenal side of the membrane; the sequence is NKFTVSGEK. Residues 91–111 traverse the membrane as a helical segment; that stretch reads FTMNLLVLLCQCSVGVAMVYA. The Cytoplasmic portion of the chain corresponds to 112 to 129; the sequence is AKCMGWIQIRTLNMRDVK. The chain crosses the membrane as a helical span at residues 130 to 150; that stretch reads TWFPISTMLVFVIYTGSKALQ. The Lumenal portion of the chain corresponds to 151–155; that stretch reads HMDIP. A helical transmembrane segment spans residues 156 to 176; it reads IYTIFKNLTIILIAYGELLWF. Residues 177-179 are Cytoplasmic-facing; the sequence is NGR. A helical membrane pass occupies residues 180–200; the sequence is ITPMVFLSFILMVLSSIIAAW. Residues 201–287 lie on the Lumenal side of the membrane; it reads PDLAPSTAKT…ASSSTLSSWS (87 aa). The chain crosses the membrane as a helical span at residues 288–308; sequence TNGYVWMLANCMISATYVLVM. Over 309–321 the chain is Cytoplasmic; the sequence is RKRIKLTGFKDWD. Residues 322–342 traverse the membrane as a helical segment; it reads TMFYNNLLSIPVLLFMSLLVE. N-linked (GlcNAc...) asparagine glycosylation is present at Asn-343. At 343-360 the chain is on the lumenal side; it reads NWSVETFEHNFPREKRST. The chain crosses the membrane as a helical span at residues 361–381; sequence LVFAILLSGTGGVFISYTTAW. The Cytoplasmic segment spans residues 382–390; sequence CIRVTSSTT. Residues 391–411 form a helical membrane-spanning segment; that stretch reads YSMVGALNKLPLALSGMLFFG. Topologically, residues 412 to 413 are lumenal; the sequence is NP. A helical membrane pass occupies residues 414–434; that stretch reads VTPYNSIGVAVGFIAGIVYAV. Topologically, residues 435–484 are cytoplasmic; that stretch reads GKYKQVVAARIANSDATGASTSLSSSSSAAPSGEYVFDLKGEIPTHTRQQ.

Belongs to the TPT transporter family. SLC35D subfamily. Homooligomer.

Its subcellular location is the golgi apparatus membrane. The protein localises to the cytoplasmic vesicle membrane. It localises to the endoplasmic reticulum membrane. In terms of biological role, involved in the import of GDP-mannose from the cytoplasm into the Golgi lumen. In Malassezia globosa (strain ATCC MYA-4612 / CBS 7966) (Dandruff-associated fungus), this protein is GDP-mannose transporter (VRG4).